Consider the following 491-residue polypeptide: MESSAKRKMDPDNPDEGPSSKVPRPETPVTKATTFLQTMLRKEVNSQLSLGDPLFPELAEESLKTFERVTEDCNENPEKDVLAELVKQIKVRVDMVRHRIKEHMLKKYTQTEEKFTGAFNMMGGCLQNALDILDKVHEPFEEMKCIGLTMQSMYENYIVPEDKREMWMACIKELHDVSKGAANKLGGALQAKARAKKDELRRKMMYMCYRNIEFFTKNSAFPKTTNGCSQAMAALQNLPQCSPDEIMAYAQKIFKILDEERDKVLTHIDHIFMDILTTCVETMCNEYKVTSDACMMTMYGGISLLSEFCRVLSCYVLEETSVMLAKRPLITKPEVISVMKRRIEEICMKVFAQYILGADPLRVCSPSVDDLRAIAEESDEEEAIVAYTLATRGASSSDSLVSPPESPVPATIPLSSVIVAENSDQEESEQSDEEEEEGAQEEREDTVSVKSEPVSEIEEVAPEEEEDGAEEPTASGGKSTHPMVTRSKADQ.

Residues 1-11 are compositionally biased toward basic and acidic residues; that stretch reads MESSAKRKMDP. Residues 1 to 24 are nuclear localization signal; the sequence is MESSAKRKMDPDNPDEGPSSKVPR. The segment at 1 to 30 is disordered; it reads MESSAKRKMDPDNPDEGPSSKVPRPETPVT. The interval 132-346 is interaction with host PML, interference with PML sumoylation and disruption of PML-associated nuclear bodies; that stretch reads ILDKVHEPFE…SVMKRRIEEI (215 aa). The tract at residues 373–445 is interaction with host STAT2; sequence AIAEESDEEE…EEGAQEERED (73 aa). A modulation of STAT3/STAT1 signaling region spans residues 410–420; that stretch reads ATIPLSSVIVA. Residues 410–445 are interaction with host STAT3; it reads ATIPLSSVIVAENSDQEESEQSDEEEEEGAQEERED. The tract at residues 421 to 472 is acidic; it reads ENSDQEESEQSDEEEEEGAQEEREDTVSVKSEPVSEIEEVAPEEEEDGAEEP. Residues 421-491 are disordered; sequence ENSDQEESEQ…PMVTRSKADQ (71 aa). Residues 423-444 are compositionally biased toward acidic residues; sequence SDQEESEQSDEEEEEGAQEERE. Positions 449 to 452 are interaction with host SUMO1; the sequence is VKSE. Lys450 participates in a covalent cross-link: Glycyl lysine isopeptide (Lys-Gly) (interchain with G-Cter in SUMO). The segment covering 455–470 has biased composition (acidic residues); sequence SEIEEVAPEEEEDGAE. Residues 475–491 are chromosome-tethering domain (CTD), binding to histones; sequence SGGKSTHPMVTRSKADQ.

The protein belongs to the HHV-5 IE1 protein family. Forms homodimers. Interacts with human p53/TP53; this interaction inhibits p53/TP53-dependent transactivation activity. Interacts with host STAT1. Interacts with host STAT2; this interaction promotes viral growth and counteracts the antiviral interferon response. May also interact with the host STAT1-STAT2 heterodimer. Interacts with host STAT3; this interaction leads to STAT3 nuclear accumulation and disruption of IL6-induced STAT3 phosphorylation. Interacts with host PML; this interaction inhibits host PML de novo sumoylation and probably inhibits PML regulation of type I and type II interferon-induced gene expression. Interacts with host DAXX. Interacts with host SP100. Interacts with host E2F1. Interacts with host RB1. Interacts with host HDAC1; this interaction inhibits histone deacetylation and promotes viral transcription. Interacts with host HDAC2; this interaction inhibits histone deacetylation and promotes viral transcription. Interacts with host HDAC3; this interaction inhibits histone deacetylation and promotes viral transcription. Interacts with host PLSCR1; this interaction inhibits IE1 transactivating activity. Post-translationally, sumoylated by host PML/nuclear domain 10. Sumoylation abolishes the interaction with host STAT2 and thus the IE1-mediated repression of interferon-stimulated genes.

It is found in the host nucleus. Functionally, plays an important role in transactivating viral early genes as well as activating its own promoter, probably by altering the viral chromatin structure. Expression of IE1 and IE2 proteins is critical for the establishment of lytic infection and reactivation from viral latency. Disrupts PML-associated ND10 nuclear bodies by interfering with host PML and SP100 sumoylation thereby altering the regulation of type I and type II interferon-induced gene expression. Promotes efficient viral growth by interacting with and directing host SP100 to degradation, leading to enhanced acetylation level of histones. In addition, functions in counteracting the host innate antiviral response. Inhibits the type I interferon pathway by directly interacting with and sequestrating host STAT2. Also targets type II interferon pathway by repressing IL6- and STAT3 target genes. Repression of STAT3 genes is due to STAT3 nuclear accumulation and disruption of IL6-induced STAT3 phosphorylation by IE1. This repression is followed by phosphorylation and activation of STAT1. Inhibits host ISG transcription by sequestering host ISGF3 in a PML- and STAT2- binding dependent manner. Alters host cell cycle progression, probably through its interaction with host E2F1 or RB1 that overcomes the RB1-mediated repression of E2F-responsive promoters. May act as a E3 ubiquitin ligase targeting several host proteins including HES1 and SP100A for ubiquitination and subsequent proteasomal degradation. Impairs the radial migration of immature neurons by downregulating Gap junction alpha-1 protein/GJA1 also via ubiquitination and degradation. The protein is Immediate early protein IE1 (UL123) of Human cytomegalovirus (strain Towne) (HHV-5).